We begin with the raw amino-acid sequence, 647 residues long: Zinc transporter ZIP4 (647 aa).

The first 22 residues, 1-22 (MASLVSLELGLLLAVLVVTATA), serve as a signal peptide directing secretion. Over 23–327 (SPPAGLLSLL…QDQLSQSERY (305 aa)) the chain is Extracellular. Cystine bridges form between cysteine 57–cysteine 62, cysteine 65–cysteine 111, and cysteine 160–cysteine 195. The tract at residues 236-255 (EAHSDHSHRHRGASSRDPVP) is disordered. Residue asparagine 261 is glycosylated (N-linked (GlcNAc...) asparagine). Residues cysteine 270 and cysteine 309 are joined by a disulfide bond. The chain crosses the membrane as a helical span at residues 328–348 (LYGSLATLLICLCAVFGLLLL). Over 349-359 (TCTGCRGVTHY) the chain is Cytoplasmic. Residues 360-380 (ILQTFLSLAVGAVTGDAVLHL) form a helical membrane-spanning segment. Over 381-402 (TPKVLGLHTHSEEGLSPQPTWR) the chain is Extracellular. Residues 403 to 423 (LLAMLAGLYAFFLFENLFNLL) form a helical membrane-spanning segment. Over 424 to 498 (LPRDPEDLED…LSPELRLLPY (75 aa)) the chain is Cytoplasmic. The Essential for SLC39A4 endocytosis signature appears at 452–454 (LQL). Positions 458–484 (ELRQPKPPHEGSRADLVAEESPELLNP) are disordered. Basic and acidic residues predominate over residues 460–470 (RQPKPPHEGSR). Residues 499–518 (MITLGDAVHNFADGLAVGAA) form a helical membrane-spanning segment. Zn(2+) is bound by residues histidine 507, asparagine 508, and aspartate 511. Residues 519–526 (FASSWKTG) are Extracellular-facing. The chain crosses the membrane as a helical span at residues 527–553 (LATSLAVFCHELPHELGDFAALLHAGL). Residues histidine 536, glutamate 537, and histidine 540 each coordinate Zn(2+). Residues 554–558 (SVRQA) lie on the Cytoplasmic side of the membrane. Residues 559–579 (LLLNLASALTAFAGLYVALAV) traverse the membrane as a helical segment. At 580 to 586 (GVSEESE) the chain is on the extracellular side. The chain crosses the membrane as a helical span at residues 587 to 607 (AWILAVATGLFLYVALCDMLP). Residues 608 to 617 (AMLKVRDPRP) are Cytoplasmic-facing. The chain crosses the membrane as a helical span at residues 618–638 (WLLFLLHNVGLLGGWTVLLLL). Residues 639-647 (SLYEDDITF) are Extracellular-facing.

Belongs to the ZIP transporter (TC 2.A.5) family. Homodimer; homodimerization is mediated by the transmembrane domain. In terms of processing, the extracellular N-terminal ectodomain is cleaved when cells are Zn(2+) deficient, N-terminally cleaved SLC39A4 is internalized at a faster rate. Under excess Zn(2+) conditions, SLC39A4 on the cell surface is rapidly endocytosed, ubiquitinated and degraded. Post-translationally, glycosylated. Highly expressed in kidney, small intestine, stomach, colon, jejunum and duodenum.

Its subcellular location is the cell membrane. The protein resides in the recycling endosome membrane. It is found in the apical cell membrane. It carries out the reaction Zn(2+)(in) = Zn(2+)(out). The Zn(2+) uniporter activity is regulated by zinc availability. Extracellular acidification stimulated SLC39A4-dependent Zn(2+) uptake. In terms of biological role, selective transporter that mediates the uptake of Zn(2+). Plays an essential role for dietary zinc uptake from small intestine. The Zn(2+) uniporter activity is regulated by zinc availability. Also exhibits polyspecific binding and transport of Cu(2+), Cd(2+) and possibly Ni(2+) but at higher concentrations. The sequence is that of Zinc transporter ZIP4 from Homo sapiens (Human).